The sequence spans 278 residues: 2-(acetamidomethylene)succinate hydrolase (278 aa).

Residues Ile-41 and 106 to 107 (SL) contribute to the chloride site. Ser-106 (nucleophile) is an active-site residue. Active-site residues include Asp-130 and His-258.

It belongs to the AB hydrolase superfamily. As to quaternary structure, homodimer.

The enzyme catalyses 2-(acetamidomethylene)succinate + 2 H2O + H(+) = succinate semialdehyde + acetate + NH4(+) + CO2. It functions in the pathway cofactor degradation; B6 vitamer degradation. Functionally, catalyzes the final reaction in the degradation of vitamin B6 from (E)-2-(acetamidomethylene)succinate (E-2AMS) to produce succinic semialdehyde, acetate, ammonia and carbon dioxide. The chain is 2-(acetamidomethylene)succinate hydrolase from Mesorhizobium japonicum (strain LMG 29417 / CECT 9101 / MAFF 303099) (Mesorhizobium loti (strain MAFF 303099)).